The sequence spans 301 residues: Glycine--tRNA ligase alpha subunit (301 aa).

This sequence belongs to the class-II aminoacyl-tRNA synthetase family. As to quaternary structure, tetramer of two alpha and two beta subunits.

It is found in the cytoplasm. The enzyme catalyses tRNA(Gly) + glycine + ATP = glycyl-tRNA(Gly) + AMP + diphosphate. The polypeptide is Glycine--tRNA ligase alpha subunit (Alteromonas mediterranea (strain DSM 17117 / CIP 110805 / LMG 28347 / Deep ecotype)).